Here is an 892-residue protein sequence, read N- to C-terminus: Isoleucine--tRNA ligase (892 aa).

The 'HIGH' region motif lies at 60–70 (PYANGSIHIGH). Glu-552 provides a ligand contact to L-isoleucyl-5'-AMP. The short motif at 593 to 597 (KMSKS) is the 'KMSKS' region element. Lys-596 contacts ATP. Residues Cys-862, Cys-865, Cys-879, and Cys-882 each contribute to the Zn(2+) site.

It belongs to the class-I aminoacyl-tRNA synthetase family. IleS type 1 subfamily. In terms of assembly, monomer. Requires Zn(2+) as cofactor.

It localises to the cytoplasm. It catalyses the reaction tRNA(Ile) + L-isoleucine + ATP = L-isoleucyl-tRNA(Ile) + AMP + diphosphate. Functionally, catalyzes the attachment of isoleucine to tRNA(Ile). As IleRS can inadvertently accommodate and process structurally similar amino acids such as valine, to avoid such errors it has two additional distinct tRNA(Ile)-dependent editing activities. One activity is designated as 'pretransfer' editing and involves the hydrolysis of activated Val-AMP. The other activity is designated 'posttransfer' editing and involves deacylation of mischarged Val-tRNA(Ile). In Mycoplasmopsis agalactiae (strain NCTC 10123 / CIP 59.7 / PG2) (Mycoplasma agalactiae), this protein is Isoleucine--tRNA ligase.